The primary structure comprises 634 residues: MSHTPKSAGSSHAPVNSQTALVIGAIGVVFGDIGTSPLYTLKEAFSPHYGLTPDHDTVLGILSLVFWALMLVVTLKYVTAIMRADNDGEGGIMALTALAQRTLPGGSRSMYVVGILGIFGASLFFGDGVITPAISVLSAVEGLEVAAPKLEPFVVPITLVVLSMLFLAQRFGTERVGKAFGPITLLWFFALGAIGVYNMARAPEVLHALNPWWGVRFFAQHNWHAVFVLGAVVLAVTGGEALYADMGHFGAKAIRRSWQFVVLPMLTLTYLGQGALVLRNPAAVSNPFYEAVPEWALYPMIVLATAATVIASQALITGAYSVASQAMQLGYIPRMHIRHTSHSTIGQIYVPAVNWCLLALVAVAVIGFGDSASLATAYGVSVTGTMLITTVLMIIYARANPRVPAPLLWLFALVFLAVDCAFFYANIIKFLDGAWFPLLLGLILFTLMRTWRRGRKLLHDEIRKDGIKLDTFLPGLMLAPPVRVPGTAVFLTADPMVVPHALMHNLKHNKVLHERNVFLTVETLQVPYAAAGKRLKIDAIGDEFYRVHVRFGFMETPDVPLALMRSCDQGGIYFDPMDTTYFASRETIVASANRGMPIWRDKLFALMHRNAAPATGFFRIPGNRLVELGAQVEI.

The next 12 helical transmembrane spans lie at 21 to 41 (LVIG…LYTL), 58 to 78 (VLGI…LKYV), 110 to 130 (MYVV…DGVI), 147 to 167 (APKL…MLFL), 179 to 199 (AFGP…VYNM), 223 to 243 (WHAV…EALY), 258 to 278 (WQFV…ALVL), 296 to 316 (ALYP…QALI), 348 to 368 (IYVP…VIGF), 377 to 397 (AYGV…IIYA), 403 to 423 (VPAP…CAFF), and 427 to 447 (IIKF…LFTL).

The protein belongs to the HAK/KUP transporter (TC 2.A.72) family.

It localises to the cell inner membrane. It carries out the reaction K(+)(in) + H(+)(in) = K(+)(out) + H(+)(out). In terms of biological role, transport of potassium into the cell. Likely operates as a K(+):H(+) symporter. This is Probable potassium transport system protein Kup from Xanthomonas axonopodis pv. citri (strain 306).